We begin with the raw amino-acid sequence, 151 residues long: Caveolin-3 (151 aa).

The Cytoplasmic segment spans residues 1–83 (MMAEERTDLE…RLLSTLLGVP (83 aa)). Lys-38 is covalently cross-linked (Glycyl lysine isopeptide (Lys-Gly) (interchain with G-Cter in SUMO3)). A required for interaction with DAG1 region spans residues 64–114 (TFTVSKYWCYRLLSTLLGVPLALLWGFLFACISFCHIWAVVPCIKSYLIEI). Residues 84–104 (LALLWGFLFACISFCHIWAVV) constitute an intramembrane region (helical). Residues 105–151 (PCIKSYLIEIQCISHIYSLCIRTFCNPVFAALGQVCSNIKVMLRKEV) are Cytoplasmic-facing.

It belongs to the caveolin family. In terms of assembly, homooligomer. Interacts with DYSF. Interacts with DLG1 and KCNA5; forms a ternary complex. Interacts with DAG1 (via its C-terminal); the interaction prevents binding of DAG1 with DMD. Interacts with TRIM72. Interacts with MUSK; may regulate MUSK signaling. Interacts with POPDC1. Interacts with CAVIN1, CAVIN2 and CAVIN4. Post-translationally, sumoylation with SUMO3 by PIAS4 may reduce agonist-induced internalization and desensitization of adrenergic receptor ABRD2. In terms of tissue distribution, expressed specifically in skeletal muscle and heart.

It localises to the golgi apparatus membrane. It is found in the cell membrane. The protein localises to the membrane. Its subcellular location is the caveola. The protein resides in the sarcolemma. Functionally, may act as a scaffolding protein within caveolar membranes. Interacts directly with G-protein alpha subunits and can functionally regulate their activity. May also regulate voltage-gated potassium channels. Plays a role in the sarcolemma repair mechanism of both skeletal muscle and cardiomyocytes that permits rapid resealing of membranes disrupted by mechanical stress. Mediates the recruitment of CAVIN2 and CAVIN3 proteins to the caveolae. This chain is Caveolin-3 (CAV3), found in Sus scrofa (Pig).